A 569-amino-acid chain; its full sequence is AsmA family protein YicH (569 aa).

Topologically, residues 1-6 (MKFIGK) are cytoplasmic. Residues 7–27 (LLLYILIALLVAIAGLYFLLQ) form a helical membrane-spanning segment. Residues 28–569 (TRWGAEHISA…GEVTSTEPVR (542 aa)) are Periplasmic-facing.

This sequence belongs to the AsmA family.

It localises to the cell inner membrane. The sequence is that of AsmA family protein YicH (yicH) from Escherichia coli (strain K12).